Here is a 101-residue protein sequence, read N- to C-terminus: MAKESMKNREAKRTKLVQRFAAKRSALKAIIQDPNAEPEAKWDAQLQLQKLPRDSSPVRQRNRCRLTGRPHGYYRKFGLSRIKLREAAMRGDVPGLVKASW.

This sequence belongs to the universal ribosomal protein uS14 family. In terms of assembly, part of the 30S ribosomal subunit. Contacts proteins S3 and S10.

Binds 16S rRNA, required for the assembly of 30S particles and may also be responsible for determining the conformation of the 16S rRNA at the A site. The protein is Small ribosomal subunit protein uS14 of Alcanivorax borkumensis (strain ATCC 700651 / DSM 11573 / NCIMB 13689 / SK2).